A 529-amino-acid polypeptide reads, in one-letter code: MPLDPGCLNGRVMKCLTFFLLLPETLKKSRKSARAQGKVQACYEIVPLALKKKMAAELYPASANTNIANSNATANAKKNALQLQHTAPPPPQLHNLNNNNIESSNWQSFHPTLRERNALMFNNELMADVHFIVGPAGASKKVPAHKYILAVGSSVFYAMFYGDLAEVKSEIHIPDVEPAAFLILLKYLYSDEIDLEADTVLATLYAAKKYIVPALAKACVNFLETSLEAKNACVLLSQSRLFEEPDLTLRCWEVIDAQAELALKSEGFCEIDLPTLEIIVTRETLNTKEDVVFEAVLNWAEAECKRQGLPITPVNKRNVLGKALYLVRIPTMTLEEFANGAAQSDILTLEETRSIFLWYTAANKPQLEFPLIKRKGLAPQRCHRFQSSAYRSNQWRYRGRCDSIQFAVDKRIFIAGLGLYGSSCGKAEYSVKIELKRQGVVLAQNLTKFVSDGCSNTFSVWFEHPVQVEQDTFYTVSAILDGNELSYFGQEGMTEVQCGKVTFQFQCSSDSTNGTGVQGGQIPELIFYA.

In terms of domain architecture, BTB spans 127-197 (ADVHFIVGPA…LYSDEIDLEA (71 aa)).

As to quaternary structure, homodimer and heterodimer. Interacts with cul3 via the BTB domain.

The protein localises to the cytoplasm. Its function is as follows. Adapter protein for the cul3 E3 ubiquitin-protein ligase complex. Involved in late neuronal development and muscle formation. The protein is BTB/POZ domain-containing protein 6 (btbd6) of Xenopus laevis (African clawed frog).